The chain runs to 270 residues: Chymotrypsin-like elastase family member 3A (270 aa).

The segment at residues 1–15 (MMLRLLSSLLLVAVA) is a signal peptide (or 16). Positions 16-28 (SGYGPPSSHSSSR) are cleaved as a propeptide — activation peptide. The Peptidase S1 domain occupies 29 to 268 (VVHGEDAVPY…FIDWIEETIA (240 aa)). A disulfide bridge connects residues Cys-58 and Cys-74. His-73 acts as the Charge relay system in catalysis. Asn-114 carries N-linked (GlcNAc...) asparagine glycosylation. Residues Cys-117 and Cys-120 are joined by a disulfide bond. Catalysis depends on Asp-123, which acts as the Charge relay system. Disulfide bonds link Cys-157–Cys-223, Cys-188–Cys-204, and Cys-213–Cys-244. The active-site Charge relay system is the Ser-217.

This sequence belongs to the peptidase S1 family. Elastase subfamily.

It catalyses the reaction Preferential cleavage: Ala-|-Xaa. Does not hydrolyze elastin.. Functionally, efficient protease with alanine specificity but only little elastolytic activity. In Homo sapiens (Human), this protein is Chymotrypsin-like elastase family member 3A (CELA3A).